The sequence spans 250 residues: Triosephosphate isomerase (250 aa).

Residue 8–10 (NWK) coordinates substrate. Histidine 93 acts as the Electrophile in catalysis. The Proton acceptor role is filled by glutamate 165. Substrate contacts are provided by glycine 171 and serine 211.

Belongs to the triosephosphate isomerase family. As to quaternary structure, homodimer.

It is found in the cytoplasm. It carries out the reaction D-glyceraldehyde 3-phosphate = dihydroxyacetone phosphate. It functions in the pathway carbohydrate biosynthesis; gluconeogenesis. The protein operates within carbohydrate degradation; glycolysis; D-glyceraldehyde 3-phosphate from glycerone phosphate: step 1/1. In terms of biological role, involved in the gluconeogenesis. Catalyzes stereospecifically the conversion of dihydroxyacetone phosphate (DHAP) to D-glyceraldehyde-3-phosphate (G3P). The sequence is that of Triosephosphate isomerase from Malacoplasma penetrans (strain HF-2) (Mycoplasma penetrans).